The chain runs to 202 residues: Protein N-terminal glutamine amidohydrolase (202 aa).

Active-site residues include cysteine 27, histidine 80, and aspartate 96.

This sequence belongs to the NTAQ1 family. As to quaternary structure, monomer.

It is found in the cytoplasm. It localises to the cytosol. The protein localises to the nucleus. The enzyme catalyses N-terminal L-glutaminyl-[protein] + H2O = N-terminal L-glutamyl-[protein] + NH4(+). Functionally, mediates the side-chain deamidation of N-terminal glutamine residues to glutamate, an important step in N-end rule pathway of protein degradation. Conversion of the resulting N-terminal glutamine to glutamate renders the protein susceptible to arginylation, polyubiquitination and degradation as specified by the N-end rule. Does not act on substrates with internal or C-terminal glutamine and does not act on non-glutamine residues in any position. Does not deaminate acetylated N-terminal glutamine. With the exception of proline, all tested second-position residues on substrate peptides do not greatly influence the activity. In contrast, a proline at position 2, virtually abolishes deamidation of N-terminal glutamine. The chain is Protein N-terminal glutamine amidohydrolase (ntaq1) from Danio rerio (Zebrafish).